The following is an 82-amino-acid chain: Sec-independent protein translocase protein TatA (82 aa).

A helical transmembrane segment spans residues 1–21; the sequence is MGSFSIWHWLIVLLIVVMVFG. Residues 46–82 form a disordered region; sequence GASTDDSATTSAPAGQVTNNSAAADKTTIDVEAKHKS. Over residues 49 to 67 the composition is skewed to polar residues; the sequence is TDDSATTSAPAGQVTNNSA. Residues 72–82 show a composition bias toward basic and acidic residues; sequence TTIDVEAKHKS.

Belongs to the TatA/E family. The Tat system comprises two distinct complexes: a TatABC complex, containing multiple copies of TatA, TatB and TatC subunits, and a separate TatA complex, containing only TatA subunits. Substrates initially bind to the TatABC complex, which probably triggers association of the separate TatA complex to form the active translocon.

It is found in the cell inner membrane. Part of the twin-arginine translocation (Tat) system that transports large folded proteins containing a characteristic twin-arginine motif in their signal peptide across membranes. TatA could form the protein-conducting channel of the Tat system. This Acidovorax ebreus (strain TPSY) (Diaphorobacter sp. (strain TPSY)) protein is Sec-independent protein translocase protein TatA.